Reading from the N-terminus, the 186-residue chain is Putative 3-methyladenine DNA glycosylase (186 aa).

It belongs to the DNA glycosylase MPG family.

This is Putative 3-methyladenine DNA glycosylase from Borrelia garinii subsp. bavariensis (strain ATCC BAA-2496 / DSM 23469 / PBi) (Borreliella bavariensis).